Reading from the N-terminus, the 851-residue chain is DNA mismatch repair protein MutS (851 aa).

G602 to S609 contributes to the ATP binding site.

It belongs to the DNA mismatch repair MutS family.

Its function is as follows. This protein is involved in the repair of mismatches in DNA. It is possible that it carries out the mismatch recognition step. This protein has a weak ATPase activity. This is DNA mismatch repair protein MutS from Streptococcus equi subsp. equi (strain 4047).